Consider the following 345-residue polypeptide: 3-isopropylmalate dehydrogenase (345 aa).

74 to 87 contributes to the NAD(+) binding site; sequence GPKWDGLPRKISPE. Arg94, Arg104, Arg132, and Asp217 together coordinate substrate. Asp217, Asp241, and Asp245 together coordinate Mg(2+). 274–286 is a binding site for NAD(+); sequence GSAPDIAGKGIAN.

The protein belongs to the isocitrate and isopropylmalate dehydrogenases family. LeuB type 1 subfamily. In terms of assembly, homodimer. Mg(2+) is required as a cofactor. It depends on Mn(2+) as a cofactor.

The protein resides in the cytoplasm. The catalysed reaction is (2R,3S)-3-isopropylmalate + NAD(+) = 4-methyl-2-oxopentanoate + CO2 + NADH. Its pathway is amino-acid biosynthesis; L-leucine biosynthesis; L-leucine from 3-methyl-2-oxobutanoate: step 3/4. Functionally, catalyzes the oxidation of 3-carboxy-2-hydroxy-4-methylpentanoate (3-isopropylmalate) to 3-carboxy-4-methyl-2-oxopentanoate. The product decarboxylates to 4-methyl-2 oxopentanoate. This Thermus thermophilus protein is 3-isopropylmalate dehydrogenase (leuB).